A 208-amino-acid polypeptide reads, in one-letter code: Ubiquitin-conjugating enzyme E2 S (208 aa).

One can recognise a UBC core domain in the interval 14–160 (QTIRQVMREL…ARMMTEIHAQ (147 aa)). The active-site Glycyl thioester intermediate is Cys98. Positions 159 to 208 (AQPAKCASTTSDAKDDDGPSTKKHAGLDKKLQDKKKEKLLKEKKRMLKRL) are disordered. Basic and acidic residues predominate over residues 170-198 (DAKDDDGPSTKKHAGLDKKLQDKKKEKLL). Residues 199–208 (KEKKRMLKRL) show a composition bias toward basic residues.

It belongs to the ubiquitin-conjugating enzyme family.

The enzyme catalyses S-ubiquitinyl-[E1 ubiquitin-activating enzyme]-L-cysteine + [E2 ubiquitin-conjugating enzyme]-L-cysteine = [E1 ubiquitin-activating enzyme]-L-cysteine + S-ubiquitinyl-[E2 ubiquitin-conjugating enzyme]-L-cysteine.. It functions in the pathway protein modification; protein ubiquitination. Catalyzes the covalent attachment of ubiquitin to other proteins. Acts as an essential factor of the anaphase promoting complex/cyclosome (APC/C), a cell cycle-regulated ubiquitin ligase that controls progression through mitosis. Acts by specifically elongating polyubiquitin chains initiated by the E2 enzyme vih/UbcH10 on APC/C substrates, enhancing the degradation of APC/C substrates by the proteasome and promoting mitotic exit. The sequence is that of Ubiquitin-conjugating enzyme E2 S from Drosophila willistoni (Fruit fly).